Here is a 242-residue protein sequence, read N- to C-terminus: 3-deoxy-manno-octulosonate cytidylyltransferase (242 aa).

It belongs to the KdsB family.

The protein resides in the cytoplasm. It catalyses the reaction 3-deoxy-alpha-D-manno-oct-2-ulosonate + CTP = CMP-3-deoxy-beta-D-manno-octulosonate + diphosphate. The protein operates within nucleotide-sugar biosynthesis; CMP-3-deoxy-D-manno-octulosonate biosynthesis; CMP-3-deoxy-D-manno-octulosonate from 3-deoxy-D-manno-octulosonate and CTP: step 1/1. Its pathway is bacterial outer membrane biogenesis; lipopolysaccharide biosynthesis. Its function is as follows. Activates KDO (a required 8-carbon sugar) for incorporation into bacterial lipopolysaccharide in Gram-negative bacteria. The sequence is that of 3-deoxy-manno-octulosonate cytidylyltransferase from Mesorhizobium japonicum (strain LMG 29417 / CECT 9101 / MAFF 303099) (Mesorhizobium loti (strain MAFF 303099)).